Consider the following 322-residue polypeptide: MYESFLTGKPMDRATAMDLMQYMASPECSDAFRAAVLSVLRVRGVTEDEMMGFYEAMHAPNDVTDATDIVGTGGDMAHTINVSTASAIVAASMGLKIAKFGNRSASGNHGAADFMSETGYAFPKSTGEALRRLSRTNFVFLYAPDFLKEFALFAGVRKMLGFPTVLNFLGPILNPLSPIRRVIGTSDPSFMELYAGIARRSGMRAIILHSADGMDEISPFAKARIMHVSDLVSESYVDASSLTGPLERRNIASADPGAISGLTLSAIRGENEDGARFVALNTAPVLIINGLASDFQEGYEAALEHIMSGGPAEFLKVIAGDR.

Residues Gly71, 74–75 (GD), Thr79, 81–84 (NVST), 99–107 (KFGNRSASG), and Ala111 each bind 5-phospho-alpha-D-ribose 1-diphosphate. Gly71 contacts anthranilate. Ser83 is a binding site for Mg(2+). Position 102 (Asn102) interacts with anthranilate. Arg157 serves as a coordination point for anthranilate. The Mg(2+) site is built by Asp215 and Glu216.

This sequence belongs to the anthranilate phosphoribosyltransferase family. Homodimer. Mg(2+) is required as a cofactor.

It catalyses the reaction N-(5-phospho-beta-D-ribosyl)anthranilate + diphosphate = 5-phospho-alpha-D-ribose 1-diphosphate + anthranilate. Its pathway is amino-acid biosynthesis; L-tryptophan biosynthesis; L-tryptophan from chorismate: step 2/5. Its function is as follows. Catalyzes the transfer of the phosphoribosyl group of 5-phosphorylribose-1-pyrophosphate (PRPP) to anthranilate to yield N-(5'-phosphoribosyl)-anthranilate (PRA). The polypeptide is Anthranilate phosphoribosyltransferase (Thermoplasma acidophilum (strain ATCC 25905 / DSM 1728 / JCM 9062 / NBRC 15155 / AMRC-C165)).